Here is a 476-residue protein sequence, read N- to C-terminus: Glycogen synthase (476 aa).

Residue lysine 15 participates in ADP-alpha-D-glucose binding.

It belongs to the glycosyltransferase 1 family. Bacterial/plant glycogen synthase subfamily.

It catalyses the reaction [(1-&gt;4)-alpha-D-glucosyl](n) + ADP-alpha-D-glucose = [(1-&gt;4)-alpha-D-glucosyl](n+1) + ADP + H(+). Its pathway is glycan biosynthesis; glycogen biosynthesis. In terms of biological role, synthesizes alpha-1,4-glucan chains using ADP-glucose. The chain is Glycogen synthase from Bacillus cereus (strain B4264).